Reading from the N-terminus, the 203-residue chain is Protein-methionine-sulfoxide reductase heme-binding subunit MsrQ (203 aa).

6 consecutive transmembrane segments (helical) span residues 10–30, 37–57, 75–95, 110–130, 147–167, and 169–189; these read IFVL…MGLL, IMMD…LSMT, LGLW…VFIL, PYII…VTSN, LVYV…RSDL, and EWAI…PPVW.

Belongs to the MsrQ family. In terms of assembly, heterodimer of a catalytic subunit (MsrP) and a heme-binding subunit (MsrQ). FMN is required as a cofactor. It depends on heme b as a cofactor.

It is found in the cell inner membrane. In terms of biological role, part of the MsrPQ system that repairs oxidized periplasmic proteins containing methionine sulfoxide residues (Met-O), using respiratory chain electrons. Thus protects these proteins from oxidative-stress damage caused by reactive species of oxygen and chlorine generated by the host defense mechanisms. MsrPQ is essential for the maintenance of envelope integrity under bleach stress, rescuing a wide series of structurally unrelated periplasmic proteins from methionine oxidation. MsrQ provides electrons for reduction to the reductase catalytic subunit MsrP, using the quinone pool of the respiratory chain. This chain is Protein-methionine-sulfoxide reductase heme-binding subunit MsrQ, found in Pseudomonas entomophila (strain L48).